The following is a 218-amino-acid chain: Deoxyribose-phosphate aldolase (218 aa).

Asp92 functions as the Proton donor/acceptor in the catalytic mechanism. Lys155 functions as the Schiff-base intermediate with acetaldehyde in the catalytic mechanism. Lys184 functions as the Proton donor/acceptor in the catalytic mechanism.

The protein belongs to the DeoC/FbaB aldolase family. DeoC type 1 subfamily.

It localises to the cytoplasm. It catalyses the reaction 2-deoxy-D-ribose 5-phosphate = D-glyceraldehyde 3-phosphate + acetaldehyde. Its pathway is carbohydrate degradation; 2-deoxy-D-ribose 1-phosphate degradation; D-glyceraldehyde 3-phosphate and acetaldehyde from 2-deoxy-alpha-D-ribose 1-phosphate: step 2/2. Catalyzes a reversible aldol reaction between acetaldehyde and D-glyceraldehyde 3-phosphate to generate 2-deoxy-D-ribose 5-phosphate. This chain is Deoxyribose-phosphate aldolase, found in Clostridium kluyveri (strain NBRC 12016).